A 261-amino-acid chain; its full sequence is Adenosylcobinamide-GDP ribazoletransferase (261 aa).

7 helical membrane-spanning segments follow: residues 4–26 (GLNGLLLAFQFLTTVPITRQIPW), 40–60 (LTGLVLGGLLVSLYLLLSPFL), 62–82 (PLVLAALLVTLSIFYSGGLHL), 110–130 (VGAFAVMTTILLIGWKVLLLM), 140–160 (FTWLLLLVPVCLRWMIIVQLI), 197–217 (CFLLLQNVILTLCFLLMIWLF), and 237–257 (IGASIEGGELFLWGIMWTFFL).

It belongs to the CobS family. It depends on Mg(2+) as a cofactor.

Its subcellular location is the cell membrane. It catalyses the reaction alpha-ribazole + adenosylcob(III)inamide-GDP = adenosylcob(III)alamin + GMP + H(+). The catalysed reaction is alpha-ribazole 5'-phosphate + adenosylcob(III)inamide-GDP = adenosylcob(III)alamin 5'-phosphate + GMP + H(+). It participates in cofactor biosynthesis; adenosylcobalamin biosynthesis; adenosylcobalamin from cob(II)yrinate a,c-diamide: step 7/7. Its function is as follows. Joins adenosylcobinamide-GDP and alpha-ribazole to generate adenosylcobalamin (Ado-cobalamin). Also synthesizes adenosylcobalamin 5'-phosphate from adenosylcobinamide-GDP and alpha-ribazole 5'-phosphate. In Halalkalibacterium halodurans (strain ATCC BAA-125 / DSM 18197 / FERM 7344 / JCM 9153 / C-125) (Bacillus halodurans), this protein is Adenosylcobinamide-GDP ribazoletransferase.